The sequence spans 186 residues: Dynactin subunit 3 (186 aa).

Alanine 2 is subject to N-acetylalanine. The stretch at 46-66 forms a coiled coil; the sequence is NIASKRERVKILYKKIEDLIK.

Belongs to the dynactin subunit 3 family. Subunit of dynactin, a multiprotein complex part of a tripartite complex with dynein and a adapter, such as BICDL1, BICD2 or HOOK3. The dynactin complex is built around ACTR1A/ACTB filament and consists of an actin-related filament composed of a shoulder domain, a pointed end and a barbed end. Its length is defined by its flexible shoulder domain. The soulder is composed of 2 DCTN1 subunits, 4 DCTN2 and 2 DCTN3. The 4 DCNT2 (via N-terminus) bind the ACTR1A filament and act as molecular rulers to determine the length. The pointed end is important for binding dynein-dynactin cargo adapters. Consists of 4 subunits: ACTR10, DCNT4, DCTN5 and DCTN6. The barbed end is composed of a CAPZA1:CAPZB heterodimers, which binds ACTR1A/ACTB filament and dynactin and stabilizes dynactin.

It is found in the cytoplasm. Its subcellular location is the cytoskeleton. It localises to the microtubule organizing center. The protein resides in the centrosome. The protein localises to the chromosome. It is found in the centromere. Its subcellular location is the kinetochore. It localises to the spindle. The protein resides in the cleavage furrow. The protein localises to the midbody. Its function is as follows. Part of the dynactin complex that activates the molecular motor dynein for ultra-processive transport along microtubules. Together with dynein may be involved in spindle assembly and cytokinesis. This chain is Dynactin subunit 3, found in Mus musculus (Mouse).